We begin with the raw amino-acid sequence, 378 residues long: Spermidine/putrescine import ATP-binding protein PotA (378 aa).

In terms of domain architecture, ABC transporter spans 18-248 (VQLAGIRKCF…PKNLFVAGFI (231 aa)). 50–57 (GPSGCGKT) contributes to the ATP binding site.

The protein belongs to the ABC transporter superfamily. Spermidine/putrescine importer (TC 3.A.1.11.1) family. As to quaternary structure, the complex is composed of two ATP-binding proteins (PotA), two transmembrane proteins (PotB and PotC) and a solute-binding protein (PotD).

It is found in the cell inner membrane. The catalysed reaction is ATP + H2O + polyamine-[polyamine-binding protein]Side 1 = ADP + phosphate + polyamineSide 2 + [polyamine-binding protein]Side 1.. Its function is as follows. Part of the ABC transporter complex PotABCD involved in spermidine/putrescine import. Responsible for energy coupling to the transport system. This is Spermidine/putrescine import ATP-binding protein PotA from Shigella flexneri.